The sequence spans 200 residues: Ribonuclease HII (200 aa).

In terms of domain architecture, RNase H type-2 spans 11–200 (QSIAGVDEVG…VRRALISLTG (190 aa)). A divalent metal cation is bound by residues D17, E18, and D109.

Belongs to the RNase HII family. The cofactor is Mn(2+). Requires Mg(2+) as cofactor.

The protein resides in the cytoplasm. The catalysed reaction is Endonucleolytic cleavage to 5'-phosphomonoester.. In terms of biological role, endonuclease that specifically degrades the RNA of RNA-DNA hybrids. This chain is Ribonuclease HII, found in Hamiltonella defensa subsp. Acyrthosiphon pisum (strain 5AT).